A 225-amino-acid polypeptide reads, in one-letter code: 7-cyano-7-deazaguanine synthase (225 aa).

10-20 (FSGGQDSTTLA) contacts ATP. Zn(2+)-binding residues include Cys190, Cys205, Cys208, and Cys211.

Belongs to the QueC family. It depends on Zn(2+) as a cofactor.

The enzyme catalyses 7-carboxy-7-deazaguanine + NH4(+) + ATP = 7-cyano-7-deazaguanine + ADP + phosphate + H2O + H(+). It functions in the pathway purine metabolism; 7-cyano-7-deazaguanine biosynthesis. Its function is as follows. Catalyzes the ATP-dependent conversion of 7-carboxy-7-deazaguanine (CDG) to 7-cyano-7-deazaguanine (preQ(0)). The sequence is that of 7-cyano-7-deazaguanine synthase from Helicobacter acinonychis (strain Sheeba).